A 305-amino-acid chain; its full sequence is MKNTQTSAPIDHMISLGDNRHIRVWETLPKNQEIKRNNTIVIAAGFARRMDHFAGLAEYLANNGFHVIRYDSLNHVGLSSGEINQFSMSVGKHSLLTVIEWLKGRGIDQIGLIASSLSARIAYDVAAEINLSFLITAVGVVNLRSTLEKALKYDYLQMEINDIPEDLDFEGYNLGSKVFVTDCFDNNWDSLDSTINKTKDLDIPFIAFISNGDDWVCQQEVKKLVGNMNSDKTKIYSLIGSSHDLGENLIVLRNFYQSVTRAAIRVDSEVIDLVDDISEPNFEDLTIITVNERRLKNKIAKRNVR.

Active-site charge relay system residues include S116, D213, and H243.

Belongs to the LuxD family.

The protein operates within lipid metabolism; fatty acid reduction for biolumincescence. Functionally, acyl transferase is part of the fatty acid reductase system required for aldehyde biosynthesis; it produces fatty acids for the luminescent reaction. This is Acyl transferase from Photobacterium leiognathi.